The following is a 244-amino-acid chain: 3-oxoacyl-[acyl-carrier-protein] reductase FabG (244 aa).

NADP(+) contacts are provided by residues 12 to 15 and Thr37; that span reads GASR. Gly50 and Gly53 together coordinate Ca(2+). NADP(+)-binding positions include 59-60 and Asn86; that span reads NV. Position 138 (Ser138) interacts with substrate. Asn145 serves as a coordination point for Ca(2+). Catalysis depends on Tyr151, which acts as the Proton acceptor. NADP(+) contacts are provided by residues 151-155 and Ile184; that span reads YAAAK. 2 residues coordinate Ca(2+): Glu233 and Thr234.

Belongs to the short-chain dehydrogenases/reductases (SDR) family. In terms of assembly, homotetramer.

The enzyme catalyses a (3R)-hydroxyacyl-[ACP] + NADP(+) = a 3-oxoacyl-[ACP] + NADPH + H(+). Its pathway is lipid metabolism; fatty acid biosynthesis. Functionally, catalyzes the NADPH-dependent reduction of beta-ketoacyl-ACP substrates to beta-hydroxyacyl-ACP products, the first reductive step in the elongation cycle of fatty acid biosynthesis. The sequence is that of 3-oxoacyl-[acyl-carrier-protein] reductase FabG (fabG) from Salmonella typhi.